The sequence spans 731 residues: E3 ubiquitin-protein ligase COP1 (731 aa).

The segment at 1 to 40 is disordered; that stretch reads MSGSRQAGSGSAGTSPGSSAASSVTSASSSLSSSPSPPSV. The Nuclear localization signal 1 motif lies at 109–113; the sequence is GSRKR. The segment at 136 to 174 adopts an RING-type zinc-finger fold; the sequence is CPICFDMIEEAYMTKCGHSFCYKCIHQSLEDNNRCPKCN. A Nuclear localization signal 2 motif is present at residues 195–206; it reads KQKQRFEEKRFK. Residues 233 to 301 are a coiled coil; sequence LDLANVNLML…DIKRVEEMSG (69 aa). The short motif at 235 to 245 is the Nuclear export signal element; that stretch reads LANVNLMLELL. The tract at residues 305–325 is disordered; sequence PVSEDSTVPQFEAPSPSHSSI. WD repeat units lie at residues 419–458, 468–508, 511–551, 553–593, 597–635, 638–677, and 691–729; these read NGSSIVSSIEFDRDCDYFAIAGVTKKIKVYEYDTVIQDAV, TCNS…RSKV, EHEK…SVAS, EAKA…QPIM, GHRKAVSYAKFVSGEEIVSASTDSQLKLWNVGKPYCLRS, GHINEKNFVGLASNGDYIACGSENNSLYLYYKGLSKTLLT, and RKEDDTNEFVSAVCWRALPDGESNVLIAANSQGTIKVLE. The interaction with TRIB1 stretch occupies residues 643–645; that stretch reads KNF.

This sequence belongs to the COP1 family. In terms of assembly, homodimer. Homodimerization is mediated by the coiled coil domain. Component of the DCX DET1-COP1 ubiquitin ligase complex at least composed of RBX1, DET1, DDB1, CUL4A and COP1. Isoform 2 does not interact with CUL4A but still binds to RBX1, suggesting that the interaction may be mediated by another cullin protein. Isoform 1 and isoform 2 interact with CUL5 but not with CUL1, CUL2 not CUL3. Interacts with bZIP transcription factors JUN, JUNB and JUND but not with FOS, ATF2 nor XBP1. Interacts with p53 (TP53). Interacts with COPS6; this interaction stabilizes RFWD2 through reducing its auto-ubiquitination and decelerating its turnover rate. Interacts with SFN; this interaction leads to SFN degradation. Isoform 4 forms heterodimers with isoform 1, preventing its association with DET1. Interacts with p53/TP53 and MTA1. Interacts with TRIB1 (via C-terminus) and TRIB2. Post-translationally, autoubiquitinated. MTA1 destabilizes it by promoting its autoubiquitination. As to expression, ubiquitously expressed at low level. Expressed at higher level in testis, placenta, skeletal muscle and heart.

It is found in the nucleus speckle. Its subcellular location is the cytoplasm. The enzyme catalyses S-ubiquitinyl-[E2 ubiquitin-conjugating enzyme]-L-cysteine + [acceptor protein]-L-lysine = [E2 ubiquitin-conjugating enzyme]-L-cysteine + N(6)-ubiquitinyl-[acceptor protein]-L-lysine.. It functions in the pathway protein modification; protein ubiquitination. Its activity is regulated as follows. TRIB1 competes with substrates for RFWD2 binding. E3 ubiquitin-protein ligase that mediates ubiquitination and subsequent proteasomal degradation of target proteins. E3 ubiquitin ligases accept ubiquitin from an E2 ubiquitin-conjugating enzyme in the form of a thioester and then directly transfers the ubiquitin to targeted substrates. Involved in JUN ubiquitination and degradation. Directly involved in p53 (TP53) ubiquitination and degradation, thereby abolishing p53-dependent transcription and apoptosis. Ubiquitinates p53 independently of MDM2 or RCHY1. Probably mediates E3 ubiquitin ligase activity by functioning as the essential RING domain subunit of larger E3 complexes. In contrast, it does not constitute the catalytic RING subunit in the DCX DET1-COP1 complex that negatively regulates JUN, the ubiquitin ligase activity being mediated by RBX1. Involved in 14-3-3 protein sigma/SFN ubiquitination and proteasomal degradation, leading to AKT activation and promotion of cell survival. Ubiquitinates MTA1 leading to its proteasomal degradation. Upon binding to TRIB1, ubiquitinates CEBPA, which lacks a canonical COP1-binding motif. The protein is E3 ubiquitin-protein ligase COP1 of Homo sapiens (Human).